Here is a 102-residue protein sequence, read N- to C-terminus: PE family immunomodulator PE5 (102 aa).

Residues 3 to 92 (LRVVPEGLAA…GASYLAGDAA (90 aa)) enclose the PE domain.

This sequence belongs to the mycobacterial PE family.

Its subcellular location is the secreted. The protein localises to the cell envelope. It is found in the cell surface. Important for the siderophore-mediated iron-acquisition function of ESX-3. May play a pivotal role in the evasion of host immune response by M.tuberculosis. Mediates production of IL-10 via activation of the p38 and ERK1/2 mitogen-activated protein kinase (MAPK) signaling pathways. In Mycobacterium tuberculosis (strain ATCC 25618 / H37Rv), this protein is PE family immunomodulator PE5.